Consider the following 873-residue polypeptide: Coatomer subunit gamma-2 (873 aa).

Positions 1 to 11 (MIKKFDKKDEE) are enriched in basic and acidic residues. A disordered region spans residues 1-21 (MIKKFDKKDEESGSGSNPFQN). HEAT repeat units lie at residues 64 to 101 (TEAT…ISED), 283 to 320 (RELA…KHPS), 321 to 355 (AVTA…GSES), 356 to 392 (SVDR…KYPR), 394 to 430 (HSAM…ENPE), and 467 to 504 (PQPS…QNDD).

The protein belongs to the COPG family. As to quaternary structure, oligomeric complex.

The protein localises to the cytoplasm. It is found in the golgi apparatus membrane. The protein resides in the cytoplasmic vesicle. It localises to the COPI-coated vesicle membrane. The coatomer is a cytosolic protein complex that binds to dilysine motifs and reversibly associates with Golgi non-clathrin-coated vesicles, which further mediate biosynthetic protein transport from the ER, via the Golgi up to the trans Golgi network. Coatomer complex is required for budding from Golgi membranes, and is essential for the retrograde Golgi-to-ER transport of dilysine-tagged proteins. This Takifugu rubripes (Japanese pufferfish) protein is Coatomer subunit gamma-2 (copg2).